The following is a 193-amino-acid chain: Zinc finger protein 740 (193 aa).

Positions 33–75 are disordered; sequence SKQAENGERAGSPDVLRCSSQGHRKDSDKSRSRKDDDSLSEAS. K34 participates in a covalent cross-link: Glycyl lysine isopeptide (Lys-Gly) (interchain with G-Cter in SUMO2). S44 is modified (phosphoserine). Over residues 55–69 the composition is skewed to basic and acidic residues; the sequence is HRKDSDKSRSRKDDD. 2 C2H2-type zinc fingers span residues 101 to 123 and 129 to 151; these read FVCEHCFGAFRSSYHLKRHILIH and FECDICDMRFIQKYHLERHKRVH. The C2H2-type 3; atypical zinc-finger motif lies at 157–179; it reads YQCERCHQCFSRTDRLLRHKRMC.

This sequence belongs to the krueppel C2H2-type zinc-finger protein family.

It localises to the nucleus. In terms of biological role, may be involved in transcriptional regulation. This chain is Zinc finger protein 740 (ZNF740), found in Homo sapiens (Human).